A 284-amino-acid polypeptide reads, in one-letter code: Elongation factor Ts (284 aa).

Residues 80 to 83 (TDFV) are involved in Mg(2+) ion dislocation from EF-Tu.

This sequence belongs to the EF-Ts family.

The protein localises to the cytoplasm. Its function is as follows. Associates with the EF-Tu.GDP complex and induces the exchange of GDP to GTP. It remains bound to the aminoacyl-tRNA.EF-Tu.GTP complex up to the GTP hydrolysis stage on the ribosome. The sequence is that of Elongation factor Ts from Photobacterium profundum (strain SS9).